A 145-amino-acid polypeptide reads, in one-letter code: Large ribosomal subunit protein uL13 (145 aa).

It belongs to the universal ribosomal protein uL13 family. As to quaternary structure, part of the 50S ribosomal subunit. Binds to Obg (AC P20964).

This protein is one of the early assembly proteins of the 50S ribosomal subunit, although it is not seen to bind rRNA by itself. It is important during the early stages of 50S assembly. This Bacillus subtilis (strain 168) protein is Large ribosomal subunit protein uL13.